The following is a 475-amino-acid chain: Trifunctional enzyme subunit beta, mitochondrial (475 aa).

Residues 1–34 (MTTILTCPFKKLPTTSKWALRFAIRPLSCSSQLR) constitute a mitochondrion transit peptide. K73 is subject to N6-acetyllysine; alternate. K73 bears the N6-succinyllysine; alternate mark. C139 serves as the catalytic Acyl-thioester intermediate. The stretch at 174-221 (IRHSRKMRKLMLDLNKAKSMGQRLSLISKFRLNFLAPELPAVAEFSTS) is an intramembrane region. N6-acetyllysine; alternate is present on K189. K189 carries the N6-succinyllysine; alternate modification. 3 positions are modified to N6-succinyllysine: K191, K273, and K292. Position 294 is an N6-acetyllysine; alternate (K294). K294 is subject to N6-succinyllysine; alternate. The residue at position 299 (K299) is an N6-acetyllysine. K333 carries the N6-acetyllysine; alternate modification. At K333 the chain carries N6-succinyllysine; alternate. 2 positions are modified to N6-acetyllysine: K349 and K362. C459 acts as the Proton donor/acceptor in catalysis.

It belongs to the thiolase-like superfamily. Thiolase family. Heterotetramer of 2 alpha/HADHA and 2 beta/HADHB subunits; forms the mitochondrial trifunctional enzyme. Also purified as higher order heterooligomers including a 4 alpha/HADHA and 4 beta/HADHB heterooligomer which physiological significance remains unclear. The mitochondrial trifunctional enzyme interacts with MTLN. Interacts with RSAD2/viperin.

The protein resides in the mitochondrion. It localises to the mitochondrion inner membrane. Its subcellular location is the mitochondrion outer membrane. It is found in the endoplasmic reticulum. The enzyme catalyses an acyl-CoA + acetyl-CoA = a 3-oxoacyl-CoA + CoA. It carries out the reaction butanoyl-CoA + acetyl-CoA = 3-oxohexanoyl-CoA + CoA. The catalysed reaction is hexanoyl-CoA + acetyl-CoA = 3-oxooctanoyl-CoA + CoA. It catalyses the reaction octanoyl-CoA + acetyl-CoA = 3-oxodecanoyl-CoA + CoA. The enzyme catalyses decanoyl-CoA + acetyl-CoA = 3-oxododecanoyl-CoA + CoA. It carries out the reaction dodecanoyl-CoA + acetyl-CoA = 3-oxotetradecanoyl-CoA + CoA. The catalysed reaction is tetradecanoyl-CoA + acetyl-CoA = 3-oxohexadecanoyl-CoA + CoA. The protein operates within lipid metabolism; fatty acid beta-oxidation. In terms of biological role, mitochondrial trifunctional enzyme catalyzes the last three of the four reactions of the mitochondrial beta-oxidation pathway. The mitochondrial beta-oxidation pathway is the major energy-producing process in tissues and is performed through four consecutive reactions breaking down fatty acids into acetyl-CoA. Among the enzymes involved in this pathway, the trifunctional enzyme exhibits specificity for long-chain fatty acids. Mitochondrial trifunctional enzyme is a heterotetrameric complex composed of two proteins, the trifunctional enzyme subunit alpha/HADHA carries the 2,3-enoyl-CoA hydratase and the 3-hydroxyacyl-CoA dehydrogenase activities, while the trifunctional enzyme subunit beta/HADHB described here bears the 3-ketoacyl-CoA thiolase activity. The protein is Trifunctional enzyme subunit beta, mitochondrial (HADHB) of Macaca fascicularis (Crab-eating macaque).